The chain runs to 1142 residues: Collagen alpha-1(XIX) chain (1142 aa).

A signal peptide spans 1 to 23 (MRLTGPWKLWLWMSIFLLPASTS). The Laminin G-like domain maps to 50-234 (NKLEVSGFDL…LHQLKIYCSA (185 aa)). Disordered regions lie at residues 288–680 (IPNK…GDPI), 704–1009 (PGLK…PGIP), and 1053–1142 (YGRP…TGGN). Collagen-like domains lie at 292–349 (GEAG…GEKG), 350–391 (DPAL…ALPG), and 392–433 (SLGI…GIQG). The segment at 292-351 (GEAGLPGAPGSPGQKGHKGEPGENGLHGAPGFPGQKGEQGFEGSKGETGEKGEQGEKGDP) is triple-helical region 1 (COL1). Residues 335–350 (SKGETGEKGEQGEKGD) show a composition bias toward basic and acidic residues. Residues 370-429 (GPPGPKGEKGDTGPPGPPALPGSLGIQGPQGPPGKEGQRGRRGKTGPPGKPGPPGPPGPP) are triple-helical region 2 (COL2). The span at 390 to 404 (PGSLGIQGPQGPPGK) shows a compositional bias: low complexity. Pro residues predominate over residues 417 to 429 (PGKPGPPGPPGPP). Basic and acidic residues-rich tracts occupy residues 444–463 (KDNK…DKGE) and 478–496 (QKGE…DRGE). The interval 448–688 (GNDEHEAGGL…PIALPLLGDI (241 aa)) is triple-helical region 3 (COL3). 8 consecutive Collagen-like domains span residues 474 to 516 (GPKG…GPPG), 568 to 624 (GPPG…GPQG), 626 to 678 (GIPG…PPGD), 728 to 778 (KGDI…APGP), 779 to 814 (TGPP…PPGP), 845 to 903 (GPPG…VPGE), 904 to 947 (PGER…GDRG), and 948 to 1004 (PKGE…GSPG). A compositionally biased stretch (low complexity) spans 640–651 (PGIQGPRGLPGL). The interval 700–818 (QASVPGLKSN…PGPPGPPGIP (119 aa)) is triple-helical region 4 (COL4). Basic and acidic residues-rich tracts occupy residues 720–731 (GKYDSMARKGDI) and 743–752 (EGPKGSKGER). Composition is skewed to pro residues over residues 806–817 (PGKPGPPGPPGI) and 840–852 (YPGP…PKGD). Positions 833 to 1012 (GGVNVPSYPG…PGIPGIPADA (180 aa)) are triple-helical region 5 (COL5). Positions 943–954 (PGDRGPKGERGD) are enriched in basic and acidic residues. Residues 952-954 (RGD) carry the Cell attachment site motif. Residues 1054–1111 (GRPGPPGKDGLPGPPGDPGPQGYRGQKGERGEPGIGLPGSPGLPGTSALGLPGSPGAP) form a triple-helical region 6 (COL6) region. Residues 1093–1107 (SPGLPGTSALGLPGS) are compositionally biased toward low complexity. Pro residues predominate over residues 1108–1119 (PGAPGPQGPPGP).

This sequence belongs to the fibril-associated collagens with interrupted helices (FACIT) family. Oligomer; disulfide-linked. Post-translationally, prolines at the third position of the tripeptide repeating unit (G-X-Y) are hydroxylated in some or all of the chains. In terms of tissue distribution, localized to vascular, neuronal, mesenchymal, and some epithelial basement membrane zones in umbilical cord.

The protein localises to the secreted. The protein resides in the extracellular space. It localises to the extracellular matrix. In terms of biological role, may act as a cross-bridge between fibrils and other extracellular matrix molecules. Involved in skeletal myogenesis in the developing esophagus. May play a role in organization of the pericellular matrix or the sphinteric smooth muscle. The protein is Collagen alpha-1(XIX) chain (COL19A1) of Homo sapiens (Human).